The sequence spans 365 residues: MASEEFPAAKTALEEYENIERQMGEQEVWSNPDKMRKLGRRQAQLGTIVNAYRTWLNIRNDLDAAQEMAGEDPDFAQEAKRLESELPEAEEKLRTALIPRDPDDARDVIMEIKAGAGGEEAALFAGDLLRMYMRYAEKRGWGVTIQSENSTELGGVKDVQMAIRAKGNPSPEEGVWASLKYEGGVHRVQRIPVTESQGRIQTSAAGVIVFPEADEDDDEIEIDPKDLKIDIFMSSGPGGQSVNTTYSAVRMTHIPTGIVVSMQDEKSQIQNRAAALRVLKSRLLAMKHEQEAAEAADMRHSQVRSLDRSERIRTYNFPENRIVDHRTNYKAYNLDAVLDGDLQAVIDSDIQADEEQRLASQQQQQ.

An N5-methylglutamine modification is found at Q240.

This sequence belongs to the prokaryotic/mitochondrial release factor family. Post-translationally, methylated by PrmC. Methylation increases the termination efficiency of RF1.

The protein localises to the cytoplasm. In terms of biological role, peptide chain release factor 1 directs the termination of translation in response to the peptide chain termination codons UAG and UAA. This chain is Peptide chain release factor 1, found in Bifidobacterium animalis subsp. lactis (strain AD011).